We begin with the raw amino-acid sequence, 420 residues long: Glucose-1-phosphate adenylyltransferase (420 aa).

Residues Tyr-107, Gly-172, 187-188 (EK), and Ser-205 contribute to the alpha-D-glucose 1-phosphate site.

This sequence belongs to the bacterial/plant glucose-1-phosphate adenylyltransferase family. As to quaternary structure, homotetramer.

The catalysed reaction is alpha-D-glucose 1-phosphate + ATP + H(+) = ADP-alpha-D-glucose + diphosphate. It participates in glycan biosynthesis; glycogen biosynthesis. In terms of biological role, involved in the biosynthesis of ADP-glucose, a building block required for the elongation reactions to produce glycogen. Catalyzes the reaction between ATP and alpha-D-glucose 1-phosphate (G1P) to produce pyrophosphate and ADP-Glc. The sequence is that of Glucose-1-phosphate adenylyltransferase from Rhodopseudomonas palustris (strain ATCC BAA-98 / CGA009).